We begin with the raw amino-acid sequence, 591 residues long: V-type ATP synthase alpha chain (591 aa).

ATP is bound at residue 233–240 (GPFGAGKT).

The protein belongs to the ATPase alpha/beta chains family.

It catalyses the reaction ATP + H2O + 4 H(+)(in) = ADP + phosphate + 5 H(+)(out). Functionally, produces ATP from ADP in the presence of a proton gradient across the membrane. The V-type alpha chain is a catalytic subunit. This chain is V-type ATP synthase alpha chain, found in Streptococcus pyogenes serotype M18 (strain MGAS8232).